The following is a 104-amino-acid chain: Putative arsenate reductase (104 aa).

C12 is a catalytic residue.

This sequence belongs to the ArsC family.

The catalysed reaction is [glutaredoxin]-dithiol + arsenate + glutathione + H(+) = glutathionyl-S-S-[glutaredoxin] + arsenite + H2O. Reduction of arsenate [As(V)] to arsenite [As(III)]. This protein expands the substrate specificity of ArsAB pump which can extrude arsenite and antimonite to allow for arsenate pumping and resistance. In Escherichia coli (strain K12), this protein is Putative arsenate reductase (yfjU).